We begin with the raw amino-acid sequence, 539 residues long: Transcription factor prr1 (539 aa).

Residues 7-111 (SSDFVRKLFN…LLDNIKRKAP (105 aa)) mediate DNA binding. Phosphothreonine is present on Thr221. Ser223 is modified (phosphoserine). Residues 251 to 263 (GTAQPSLYNTPSS) are compositionally biased toward polar residues. The interval 251 to 281 (GTAQPSLYNTPSSDYELANQEKPADSMASAA) is disordered. The Response regulatory domain maps to 369 to 483 (RILLVEDDEL…TLLQLLKKQL (115 aa)). Residue Asp418 is modified to 4-aspartylphosphate.

The protein in the N-terminal section; belongs to the HSF family.

The protein resides in the nucleus. Its function is as follows. Involved in oxidative stress. Transcription factor that acts upon trr1 and ctt1. This Schizosaccharomyces pombe (strain 972 / ATCC 24843) (Fission yeast) protein is Transcription factor prr1 (prr1).